A 462-amino-acid chain; its full sequence is Kinetochore protein Nuf2-B (462 aa).

Residues S143–Q462 adopt a coiled-coil conformation. The segment at E236–K259 is disordered. The segment covering P248–K259 has biased composition (basic and acidic residues).

Belongs to the NUF2 family. Component of the NDC80 complex, which is composed of ndc80, cdca1, spbc24 and spbc25. The NDC80 complex interacts with mis12 and zwint.

The protein localises to the nucleus. Its subcellular location is the chromosome. It is found in the centromere. The protein resides in the kinetochore. Acts as a component of the essential kinetochore-associated NDC80 complex, which is required for chromosome segregation and spindle checkpoint activity. Required for kinetochore integrity and the organization of stable microtubule binding sites in the outer plate of the kinetochore. The NDC80 complex synergistically enhances the affinity of the SKA1 complex for microtubules and may allow the NDC80 complex to track depolymerizing microtubules. This chain is Kinetochore protein Nuf2-B (nuf2-b), found in Xenopus laevis (African clawed frog).